The primary structure comprises 144 residues: D-aminoacyl-tRNA deacylase (144 aa).

The Gly-cisPro motif, important for rejection of L-amino acids signature appears at 136-137; sequence GP.

It belongs to the DTD family. In terms of assembly, homodimer.

It is found in the cytoplasm. The enzyme catalyses glycyl-tRNA(Ala) + H2O = tRNA(Ala) + glycine + H(+). The catalysed reaction is a D-aminoacyl-tRNA + H2O = a tRNA + a D-alpha-amino acid + H(+). Its function is as follows. An aminoacyl-tRNA editing enzyme that deacylates mischarged D-aminoacyl-tRNAs. Also deacylates mischarged glycyl-tRNA(Ala), protecting cells against glycine mischarging by AlaRS. Acts via tRNA-based rather than protein-based catalysis; rejects L-amino acids rather than detecting D-amino acids in the active site. By recycling D-aminoacyl-tRNA to D-amino acids and free tRNA molecules, this enzyme counteracts the toxicity associated with the formation of D-aminoacyl-tRNA entities in vivo and helps enforce protein L-homochirality. This chain is D-aminoacyl-tRNA deacylase, found in Pasteurella multocida (strain Pm70).